A 362-amino-acid polypeptide reads, in one-letter code: Chorismate synthase (362 aa).

Residue Arg46 participates in NADP(+) binding. FMN contacts are provided by residues 122–124 (RSS), 238–239 (NA), Gly278, 293–297 (KPTPS), and Arg319.

Belongs to the chorismate synthase family. As to quaternary structure, homotetramer. FMNH2 is required as a cofactor.

The catalysed reaction is 5-O-(1-carboxyvinyl)-3-phosphoshikimate = chorismate + phosphate. The protein operates within metabolic intermediate biosynthesis; chorismate biosynthesis; chorismate from D-erythrose 4-phosphate and phosphoenolpyruvate: step 7/7. In terms of biological role, catalyzes the anti-1,4-elimination of the C-3 phosphate and the C-6 proR hydrogen from 5-enolpyruvylshikimate-3-phosphate (EPSP) to yield chorismate, which is the branch point compound that serves as the starting substrate for the three terminal pathways of aromatic amino acid biosynthesis. This reaction introduces a second double bond into the aromatic ring system. In Campylobacter jejuni (strain RM1221), this protein is Chorismate synthase.